A 148-amino-acid chain; its full sequence is UPF0756 membrane protein NMCC_1816 (148 aa).

The next 4 helical transmembrane spans lie at 13–35 (LILL…LLLM), 50–70 (HGLN…LVSG), 80–100 (FLNF…WLAG), and 121–141 (VIGV…AGIL).

This sequence belongs to the UPF0756 family.

It is found in the cell membrane. This chain is UPF0756 membrane protein NMCC_1816, found in Neisseria meningitidis serogroup C (strain 053442).